Reading from the N-terminus, the 155-residue chain is UPF0251 protein Paes_1249 (155 aa).

Belongs to the UPF0251 family.

This chain is UPF0251 protein Paes_1249, found in Prosthecochloris aestuarii (strain DSM 271 / SK 413).